The sequence spans 303 residues: Glutathione transport system permease protein GsiD (303 aa).

The next 6 membrane-spanning stretches (helical) occupy residues 40 to 60, 105 to 125, 144 to 164, 165 to 185, 222 to 242, and 266 to 286; these read AMTA…ARWI, LAAG…LGLL, LFAF…GSGI, ANVI…LVRG, IVVF…SLSF, and VIAP…VLAF. The ABC transmembrane type-1 domain occupies 101–290; sequence AQISLAAGVF…LTVLAFNLLG (190 aa).

This sequence belongs to the binding-protein-dependent transport system permease family. In terms of assembly, the complex is composed of two ATP-binding proteins (GsiA), two transmembrane proteins (GsiC and GsiD) and a solute-binding protein (GsiB).

Its subcellular location is the cell inner membrane. In terms of biological role, part of the ABC transporter complex GsiABCD involved in glutathione import. Probably responsible for the translocation of the substrate across the membrane. This Escherichia coli O157:H7 protein is Glutathione transport system permease protein GsiD.